The primary structure comprises 211 residues: Uracil phosphoribosyltransferase (211 aa).

5-phospho-alpha-D-ribose 1-diphosphate contacts are provided by residues Arg78, Arg103, and Asp130–Thr138. Residues Ile195 and Gly200–Ala202 contribute to the uracil site. Asp201 is a 5-phospho-alpha-D-ribose 1-diphosphate binding site.

This sequence belongs to the UPRTase family. Mg(2+) serves as cofactor.

It catalyses the reaction UMP + diphosphate = 5-phospho-alpha-D-ribose 1-diphosphate + uracil. It participates in pyrimidine metabolism; UMP biosynthesis via salvage pathway; UMP from uracil: step 1/1. With respect to regulation, allosterically activated by GTP. Catalyzes the conversion of uracil and 5-phospho-alpha-D-ribose 1-diphosphate (PRPP) to UMP and diphosphate. The protein is Uracil phosphoribosyltransferase of Renibacterium salmoninarum (strain ATCC 33209 / DSM 20767 / JCM 11484 / NBRC 15589 / NCIMB 2235).